The sequence spans 395 residues: Axin-like protein 1 (395 aa).

Positions 4–132 (RSKTFSDRIL…TTTADVSNTW (129 aa)) constitute an RGS domain. A disordered region spans residues 190-230 (QETKNSSETEEEKKKERSADPYGSDGFAPPPQSTQTHTLRN). Over residues 194 to 208 (NSSETEEEKKKERSA) the composition is skewed to basic and acidic residues. The 86-residue stretch at 301–386 (EIQKLTVELR…RITAICRMCP (86 aa)) folds into the DIX domain.

As to quaternary structure, interacts with bar-1, dsh-2, gsk-3, and mig-5.

Functionally, works in parallel with pry-1 in negatively regulating bar-1 signaling in vulval precursor cells and Q neuroblasts. Shown to have a role in excretory cell development. This is Axin-like protein 1 (axl-1) from Caenorhabditis briggsae.